The following is a 445-amino-acid chain: Histamine H3 receptor (445 aa).

The Extracellular segment spans residues 1 to 39 (MERAPPDGLMNASGALAGEAAAAGGARGFSAAWTAVLAA). The N-linked (GlcNAc...) asparagine glycan is linked to asparagine 11. A helical membrane pass occupies residues 40-60 (LMALLIVATVLGNALVMLAFV). Residues 61–70 (ADSSLRTQNN) lie on the Cytoplasmic side of the membrane. The chain crosses the membrane as a helical span at residues 71-91 (FFLLNLAISDFLVGAFCIPLY). The Extracellular portion of the chain corresponds to 92–108 (VPYVLTGRWTFGRGLCK). A disulfide bond links cysteine 107 and cysteine 188. The helical transmembrane segment at 109 to 129 (LWLVVDYLLCASSVFNIVLIS) threads the bilayer. At 130-156 (YDRFLSVTRAVSYRAQQGDTRRAVRKM) the chain is on the cytoplasmic side. A helical membrane pass occupies residues 157 to 177 (ALVWVLAFLLYGPAILSWEYL). Residues 178-196 (SGGSSIPEGHCYAEFFYNW) are Extracellular-facing. Residues 197 to 217 (YFLITASTLEFFTPFLSVTFF) form a helical membrane-spanning segment. Over 218–359 (NLSIYLNIQR…LSRDKKVAKS (142 aa)) the chain is Cytoplasmic. 2 disordered regions span residues 234-259 (DGGR…PSCW) and 273-336 (HRYG…LEKR). Residues 241–256 (PEPPPDAQPSPPPAPP) are compositionally biased toward pro residues. Gly residues predominate over residues 289–299 (AGLGGGSGGGA). Over residues 300 to 312 (AASPTSSSGSSSR) the composition is skewed to low complexity. A helical membrane pass occupies residues 360–380 (LAIIVSIFGLCWAPYTLLMII). The Extracellular portion of the chain corresponds to 381 to 396 (RAACHGHCVPDYWYET). A helical membrane pass occupies residues 397-417 (SFWLLWANSAVNPVLYPLCHY). Over 418-445 (SFRRAFTKLLCPQKLKVQPHGSLEQCWK) the chain is Cytoplasmic. The residue at position 439 (serine 439) is a Phosphoserine.

This sequence belongs to the G-protein coupled receptor 1 family.

The protein resides in the cell membrane. Functionally, the H3 subclass of histamine receptors could mediate the histamine signals in CNS and peripheral nervous system. Signals through the inhibition of adenylate cyclase and displays high constitutive activity (spontaneous activity in the absence of agonist). This Mus musculus (Mouse) protein is Histamine H3 receptor (Hrh3).